Here is a 43-residue protein sequence, read N- to C-terminus: Myotoxin-2 (43 aa).

3 cysteine pairs are disulfide-bonded: cysteine 4–cysteine 36, cysteine 11–cysteine 30, and cysteine 18–cysteine 37.

This sequence belongs to the crotamine-myotoxin family. In terms of assembly, monomer. Expressed by the venom gland.

The protein localises to the secreted. Cationic peptide that possesses multiple functions. It acts as a cell-penetrating peptide (CPP), and as a potent voltage-gated potassium channel (Kv) inhibitor. It exhibits antimicrobial activities, hind limb paralysis, and severe muscle necrosis by a non-enzymatic mechanism. The sequence is that of Myotoxin-2 from Crotalus concolor (Midget faded rattlesnake).